The primary structure comprises 1382 residues: Hepatocyte growth factor receptor (1382 aa).

The first 24 residues, 1-24, serve as a signal peptide directing secretion; the sequence is MKAPAVLAPGILVLLFTLVQKSYG. Topologically, residues 25–933 are extracellular; the sequence is ECREALVKSE…VIVQPDQNFT (909 aa). The 490-residue stretch at 27–516 folds into the Sema domain; that stretch reads REALVKSEMN…TGKKITKIPL (490 aa). Residue Asn45 is glycosylated (N-linked (GlcNAc...) asparagine). 4 cysteine pairs are disulfide-bonded: Cys95–Cys101, Cys98–Cys160, Cys133–Cys141, and Cys173–Cys176. N-linked (GlcNAc...) asparagine glycosylation is present at Asn106. Residues Asn203 and Asn359 are each glycosylated (N-linked (GlcNAc...) asparagine). 2 disulfide bridges follow: Cys299/Cys364 and Cys386/Cys398. N-linked (GlcNAc...) asparagine glycosylation is found at Asn400 and Asn406. Intrachain disulfides connect Cys521–Cys539, Cys527–Cys562, Cys530–Cys546, and Cys542–Cys552. IPT/TIG domains are found at residues 564–656, 658–740, and 743–837; these read PTIY…FSYV, PVIT…FSYQ, and PIVY…LIYV. Thr583 is a glycosylation site (O-linked (Man) threonine). Asn608 and Asn636 each carry an N-linked (GlcNAc...) asparagine glycan. Residues Thr677 and Thr762 are each glycosylated (O-linked (Man) threonine). Residues Asn786, Asn880, and Asn931 are each glycosylated (N-linked (GlcNAc...) asparagine). A helical transmembrane segment spans residues 934 to 956; the sequence is GLIVGVISISIILLLLLGVFLWL. At 957–1382 the chain is on the cytoplasmic side; it reads KKRKQIKDLG…QDNIDGEGDT (426 aa). The residue at position 967 (Ser967) is a Phosphoserine. The residue at position 978 (Thr978) is a Phosphothreonine. Ser991, Ser998, and Ser1001 each carry phosphoserine. Tyr1004 is modified (phosphotyrosine). Residues 1079–1346 form the Protein kinase domain; it reads VHFNEVIGRG…RISAIFSTFI (268 aa). ATP is bound by residues 1085–1093 and Lys1111; that span reads IGRGHFGCV. Asp1205 (proton acceptor) is an active-site residue. An interaction with RANBP9 region spans residues 1213–1382; that stretch reads LDEKFTVKVA…QDNIDGEGDT (170 aa). The residue at position 1231 (Tyr1231) is a Phosphotyrosine. Phosphotyrosine; by autocatalysis occurs at positions 1235 and 1236. Thr1290 bears the Phosphothreonine mark. The segment at 1321–1360 is interaction with MUC20; the sequence is WHPKAELRPSFSELVSRISAIFSTFIGEHYVHVNATYVNV. A phosphotyrosine; by autocatalysis mark is found at Tyr1350 and Tyr1357. At Tyr1366 the chain carries Phosphotyrosine.

The protein belongs to the protein kinase superfamily. Tyr protein kinase family. Heterodimer made of an alpha chain (50 kDa) and a beta chain (145 kDa) which are disulfide linked. Binds PLXNB1. Interacts when phosphorylated with downstream effectors including STAT3, PIK3R1, SRC, PCLG1, GRB2 and GAB1. Interacts with SPSB1, SPSB2 and SPSB4. Interacts with INPP5D/SHIP1. When phosphorylated at Tyr-1357, interacts with INPPL1/SHIP2. Interacts with RANBP9 and RANBP10, as well as SPSB1, SPSB2, SPSB3 and SPSB4. SPSB1 binding occurs in the presence and in the absence of HGF, however HGF treatment has a positive effect on this interaction. Interacts with MUC20; prevents interaction with GRB2 and suppresses hepatocyte growth factor-induced cell proliferation. Interacts with GRB10. Interacts with PTPN1 and PTPN2. Interacts with HSP90AA1 and HSP90AB1; the interaction suppresses MET kinase activity. Interacts with tensin TNS3. Interacts (when phosphorylated) with tensin TNS4 (via SH2 domain); the interaction increases MET protein stability by inhibiting MET endocytosis and subsequent lysosomal degradation. Post-translationally, autophosphorylated in response to ligand binding on Tyr-1235 and Tyr-1236 in the kinase domain leading to further phosphorylation of Tyr-1350 and Tyr-1357 in the C-terminal multifunctional docking site. Dephosphorylated by PTPRJ at Tyr-1350 and Tyr-1366. Dephosphorylated by PTPN1 and PTPN2. Ubiquitinated. Ubiquitination by CBL regulates the receptor stability and activity through proteasomal degradation. In terms of processing, O-mannosylation of IPT/TIG domains by TMEM260 is required for protein maturation. O-mannosylated residues are composed of single mannose glycans that are not elongated or modified.

It is found in the membrane. It catalyses the reaction L-tyrosyl-[protein] + ATP = O-phospho-L-tyrosyl-[protein] + ADP + H(+). In its inactive state, the C-terminal tail interacts with the catalytic domain and inhibits the kinase activity. Upon ligand binding, the C-terminal tail is displaced and becomes phosphorylated, thus increasing the kinase activity. Functionally, receptor tyrosine kinase that transduces signals from the extracellular matrix into the cytoplasm by binding to hepatocyte growth factor/HGF ligand. Regulates many physiological processes including proliferation, scattering, morphogenesis and survival. Ligand binding at the cell surface induces autophosphorylation of MET on its intracellular domain that provides docking sites for downstream signaling molecules. Following activation by ligand, interacts with the PI3-kinase subunit PIK3R1, PLCG1, SRC, GRB2, STAT3 or the adapter GAB1. Recruitment of these downstream effectors by MET leads to the activation of several signaling cascades including the RAS-ERK, PI3 kinase-AKT, or PLCgamma-PKC. The RAS-ERK activation is associated with the morphogenetic effects while PI3K/AKT coordinates prosurvival effects. During embryonic development, MET signaling plays a role in gastrulation, development and migration of muscles and neuronal precursors, angiogenesis and kidney formation. In adults, participates in wound healing as well as organ regeneration and tissue remodeling. Also promotes differentiation and proliferation of hematopoietic cells. This is Hepatocyte growth factor receptor (MET) from Felis catus (Cat).